Reading from the N-terminus, the 100-residue chain is UPF0473 protein Lm4b_01511 (100 aa).

This sequence belongs to the UPF0473 family.

This is UPF0473 protein Lm4b_01511 from Listeria monocytogenes serotype 4b (strain CLIP80459).